We begin with the raw amino-acid sequence, 447 residues long: UDP-N-acetylglucosamine 1-carboxyvinyltransferase (447 aa).

27-28 lines the phosphoenolpyruvate pocket; it reads KN. A UDP-N-acetyl-alpha-D-glucosamine-binding site is contributed by arginine 97. Cysteine 121 functions as the Proton donor in the catalytic mechanism. The residue at position 121 (cysteine 121) is a 2-(S-cysteinyl)pyruvic acid O-phosphothioketal. UDP-N-acetyl-alpha-D-glucosamine is bound by residues 126–130, aspartate 314, and valine 336; that span reads RPVDL.

The protein belongs to the EPSP synthase family. MurA subfamily.

It is found in the cytoplasm. The catalysed reaction is phosphoenolpyruvate + UDP-N-acetyl-alpha-D-glucosamine = UDP-N-acetyl-3-O-(1-carboxyvinyl)-alpha-D-glucosamine + phosphate. The protein operates within cell wall biogenesis; peptidoglycan biosynthesis. In terms of biological role, cell wall formation. Adds enolpyruvyl to UDP-N-acetylglucosamine. The polypeptide is UDP-N-acetylglucosamine 1-carboxyvinyltransferase (Trichormus variabilis (strain ATCC 29413 / PCC 7937) (Anabaena variabilis)).